The primary structure comprises 295 residues: Protein LplC (295 aa).

The next 6 membrane-spanning stretches (helical) occupy residues 21-41 (ILFLGGVGAITILPFLYIIAG), 81-101 (VSIFITVVGTAVQLFFTFTMA), 116-136 (LNLVIFSMLFSGGMIPTYLVV), 142-162 (LDTYWALILPMAINPFNLIII), 199-219 (VIATFALFYAVGIWNDFFHAL), and 260-280 (GIKLAVIVIATLPILAVYPFL). In terms of domain architecture, ABC transmembrane type-1 spans 79 to 280 (MGVSIFITVV…LPILAVYPFL (202 aa)).

This sequence belongs to the binding-protein-dependent transport system permease family. CysTW subfamily.

Its subcellular location is the cell membrane. In Bacillus subtilis (strain 168), this protein is Protein LplC (lplC).